The primary structure comprises 338 residues: Holliday junction branch migration complex subunit RuvB (338 aa).

Basic and acidic residues predominate over residues 1 to 14; sequence MENDHGILSDHPSG. The segment at 1–21 is disordered; the sequence is MENDHGILSDHPSGEEESQVE. The tract at residues 3–185 is large ATPase domain (RuvB-L); the sequence is NDHGILSDHP…FGIVEHMNYY (183 aa). Residues L24, R25, G66, K69, T70, T71, 132-134, R175, Y185, and R222 each bind ATP; that span reads EDY. T70 lines the Mg(2+) pocket. The tract at residues 186 to 256 is small ATPAse domain (RuvB-S); sequence TQDELTKIIF…IVKQALSLLQ (71 aa). Positions 259-338 are head domain (RuvB-H); it reads DRGLDEIDRK…LGIEYPTDKN (80 aa). DNA is bound by residues R314 and R319.

It belongs to the RuvB family. Homohexamer. Forms an RuvA(8)-RuvB(12)-Holliday junction (HJ) complex. HJ DNA is sandwiched between 2 RuvA tetramers; dsDNA enters through RuvA and exits via RuvB. An RuvB hexamer assembles on each DNA strand where it exits the tetramer. Each RuvB hexamer is contacted by two RuvA subunits (via domain III) on 2 adjacent RuvB subunits; this complex drives branch migration. In the full resolvosome a probable DNA-RuvA(4)-RuvB(12)-RuvC(2) complex forms which resolves the HJ.

The protein localises to the cytoplasm. It catalyses the reaction ATP + H2O = ADP + phosphate + H(+). The RuvA-RuvB-RuvC complex processes Holliday junction (HJ) DNA during genetic recombination and DNA repair, while the RuvA-RuvB complex plays an important role in the rescue of blocked DNA replication forks via replication fork reversal (RFR). RuvA specifically binds to HJ cruciform DNA, conferring on it an open structure. The RuvB hexamer acts as an ATP-dependent pump, pulling dsDNA into and through the RuvAB complex. RuvB forms 2 homohexamers on either side of HJ DNA bound by 1 or 2 RuvA tetramers; 4 subunits per hexamer contact DNA at a time. Coordinated motions by a converter formed by DNA-disengaged RuvB subunits stimulates ATP hydrolysis and nucleotide exchange. Immobilization of the converter enables RuvB to convert the ATP-contained energy into a lever motion, pulling 2 nucleotides of DNA out of the RuvA tetramer per ATP hydrolyzed, thus driving DNA branch migration. The RuvB motors rotate together with the DNA substrate, which together with the progressing nucleotide cycle form the mechanistic basis for DNA recombination by continuous HJ branch migration. Branch migration allows RuvC to scan DNA until it finds its consensus sequence, where it cleaves and resolves cruciform DNA. In Limosilactobacillus reuteri (strain DSM 20016) (Lactobacillus reuteri), this protein is Holliday junction branch migration complex subunit RuvB.